A 1046-amino-acid chain; its full sequence is MEPDTATEAATVAVSDARATVVVVEDEQPGPSTFKEEGAAAAATEGTTATEKGEKKEKITSPFQLKLAAKASKSEKEMDPEYEEKMVNMPLKADRAKRFEFLLKQTELFAHFIQPSAQKSPTSPLNMKLARPRVKKDDKQSLISVGDYRHRRTEQEEDEELLSESRKTSNVCVRFEVSPSYVKGGPLRDYQIRGLNWLISLYENGVNGILADEMGLGKTLQTIALLGYLKHYRNIPGPHMVLVPKSTLHNWMNEFKRWVPSLRVICFVGDKDVRAAFIRDEMMPGEWDVCVTSYEMVIKEKSVFKKFHWRYLVIDEAHRIKNEKSKLSEIVREFKSTNRLLLTGTPLQNNLHELWALLNFLLPDVFNSADDFDSWFDTKNCLGDQKLVERLHAVLKPFLLRRIKTDVEKSLPPKKEIKIYLGLSKMQREWYTKILMKDIDVLNSSGKMDKMRLLNILMQLRKCCNHPYLFDGAEPGPPYTTDEHIVGNSGKMVALDKLLARIKEQGSRVLIFSQMTRLLDILEDYCMWRGYEYSRLDGQTPHEEREEAIDAFNAPNSSKFIFMLSTRAGGLGINLASADVVILYDSDWNPQVDLQAMDRAHRIGQKKPVRVFRLITDNTVEERIVERAEIKLRLDSIVIQQGRLIDQQSNKLAKEEMLQMIRHGATHVFACKESELTDEDIVTILERGEKKTAEMNERMQKMGESSLRNFRMDLEQSLYKFEGEDYREKQKLGTVEWIEPPKRERKANYAVDAYFREALRVSEPKIPKAPRPPKQPNVQDFQFFPPRLFELLEKEILYYRKTIGYKVPRNPEIPNPAIAQREEQKKIDGAEPLTPQETEEKDKLLTQGFTNWTKRDFNQFIKANEKYGRDDIDNIAREVEGKSPEEVMEYSAVFWERCNELQDIEKIMAQIERGEARIQRRISIKKALDAKIARYKAPFHQLRIQYGTSKGKNYTEEEDRFLICMLHKMGFDRENVYEELRQCVRNAPQFRFDWFIKSRTAMEFQRRCNTLISLIEKENMEIEERERAEKKKRATKTPMVKFSAFS.

Positions 27–61 are disordered; sequence EQPGPSTFKEEGAAAAATEGTTATEKGEKKEKITS. The segment covering 39-50 has biased composition (low complexity); the sequence is AAAAATEGTTAT. A phosphoserine mark is found at serine 120 and serine 123. The region spanning 199 to 364 is the Helicase ATP-binding domain; that stretch reads ISLYENGVNG…WALLNFLLPD (166 aa). 212-219 lines the ATP pocket; that stretch reads DEMGLGKT. The short motif at 315 to 318 is the DEAH box element; it reads DEAH. The 152-residue stretch at 494–645 folds into the Helicase C-terminal domain; that stretch reads ALDKLLARIK…SIVIQQGRLI (152 aa). Glycyl lysine isopeptide (Lys-Gly) (interchain with G-Cter in SUMO2) cross-links involve residues lysine 654, lysine 720, and lysine 742. Residues 819 to 840 are disordered; sequence AQREEQKKIDGAEPLTPQETEE. The segment covering 820-829 has biased composition (basic and acidic residues); the sequence is QREEQKKIDG. The 53-residue stretch at 847–899 folds into the SANT 1 domain; the sequence is QGFTNWTKRDFNQFIKANEKYGRDDIDNIAREVEGKSPEEVMEYSAVFWERCN. Tyrosine 946 bears the Phosphotyrosine mark. One can recognise an SANT 2 domain in the interval 950–1014; that stretch reads KGKNYTEEED…QRRCNTLISL (65 aa). Residues 1003–1037 adopt a coiled-coil conformation; it reads EFQRRCNTLISLIEKENMEIEERERAEKKKRATKT. Positions 1025-1046 are disordered; the sequence is RERAEKKKRATKTPMVKFSAFS.

It belongs to the SNF2/RAD54 helicase family. ISWI subfamily. As to quaternary structure, may form homodimers. Component of the ACF-1 ISWI chromatin remodeling complex at least composed of SMARCA1 and BAZ1A, which regulates the spacing of histone octamers on the DNA template to facilitate access to DNA. Within the complex interacts with BAZ1A; the interaction is direct. Component of the WICH-1 ISWI chromatin remodeling complex at least composed of SMARCA1 and BAZ1B/WSTF. Within the complex interacts with BAZ1B/WSTF. Component of the NoRC-1 ISWI chromatin remodeling complex at least composed of SMARCA1 and BAZ2A/TIP5. Within the complex interacts with BAZ2A/TIP5. Component of the BRF-1 ISWI chromatin remodeling complex at least composed of SMARCA1 and BAZ2B. Within the complex interacts with BAZ2B. Component of the NURF-1 ISWI chromatin remodeling complex (also called the nucleosome-remodeling factor (NURF) complex) at least composed of SMARCA1, BPTF, RBBP4 and RBBP7. Within the complex interacts with BPTF. Within the complex interacts with RBBP4 and RBBP7. Component of the CERF-1 ISWI chromatin remodeling complex (also called the CECR2-containing-remodeling factor (CERF) complex) at least composed of CECR2 and SMARCA1. LUZP1 is detected as part of the CERF-1 complex in embryonic stem cells where it is involved in complex stabilization but is not detected in the complex in the testis. Component of the RSF-1 ISWI chromatin remodeling complex at least composed of SMARCA1 and RSF1. Within the complex interacts with RSF1. Interacts with PRLR. Interacts with ERCC6. As to expression, predominantly expressed in cortex, cerebellum, ovaries, testes, uterus and placenta.

It is found in the nucleus. It carries out the reaction ATP + H2O = ADP + phosphate + H(+). Functionally, ATPase that possesses intrinsic ATP-dependent chromatin-remodeling activity. ATPase activity is substrate-dependent, and is increased when nucleosomes are the substrate, but is also catalytically active when DNA alone is the substrate. Catalytic subunit of ISWI chromatin-remodeling complexes, which form ordered nucleosome arrays on chromatin and facilitate access to DNA during DNA-templated processes such as DNA replication, transcription, and repair. Within the ISWI chromatin-remodeling complexes, slides edge- and center-positioned histone octamers away from their original location on the DNA template. Catalytic activity and histone octamer sliding propensity is regulated and determined by components of the ISWI chromatin-remodeling complexes. The BAZ1A-, BAZ1B-, BAZ2A- and BAZ2B-containing ISWI chromatin-remodeling complexes regulate the spacing of nucleosomes along the chromatin and have the ability to slide mononucleosomes to the center of a DNA template. The CECR2- and RSF1-containing ISWI chromatin-remodeling complexes do not have the ability to slide mononucleosomes to the center of a DNA template. Within the NURF-1 and CERF-1 ISWI chromatin remodeling complexes, nucleosomes are the preferred substrate for its ATPase activity. Within the NURF-1 ISWI chromatin-remodeling complex, binds to the promoters of En1 and En2 to positively regulate their expression and promote brain development. May promote neurite outgrowth. May be involved in the development of luteal cells. Facilitates nucleosome assembly during DNA replication, ensuring replication fork progression and genomic stability by preventing replication stress and nascent DNA gaps. The protein is SWI/SNF-related matrix-associated actin-dependent regulator of chromatin subfamily A member 1 (Smarca1) of Mus musculus (Mouse).